The following is a 400-amino-acid chain: Inosine-5'-monophosphate dehydrogenase (400 aa).

The span at 96–116 (KNESTPDQNLDKESTDGKDTK) shows a compositional bias: basic and acidic residues. A disordered region spans residues 96 to 125 (KNESTPDQNLDKESTDGKDTKSNNNIDAYS). Residues D163 and 212–214 (GIG) contribute to the NAD(+) site. K(+) is bound by residues G214 and G216. S217 is a binding site for IMP. C219 contributes to the K(+) binding site. Catalysis depends on C219, which acts as the Thioimidate intermediate. Residues 252-254 (DGG), 275-276 (GS), and 299-303 (YRGMG) contribute to the IMP site. R315 functions as the Proton acceptor in the catalytic mechanism. IMP is bound at residue E329. Residues E383, S384, and H385 each coordinate K(+).

It belongs to the IMPDH/GMPR family. Homotetramer. The cofactor is K(+).

It is found in the cytoplasm. The catalysed reaction is IMP + NAD(+) + H2O = XMP + NADH + H(+). Its pathway is purine metabolism; XMP biosynthesis via de novo pathway; XMP from IMP: step 1/1. Mycophenolic acid (MPA) is a non-competitive inhibitor that prevents formation of the closed enzyme conformation by binding to the same site as the amobile flap. In contrast, mizoribine monophosphate (MZP) is a competitive inhibitor that induces the closed conformation. MPA is a potent inhibitor of mammalian IMPDHs but a poor inhibitor of the bacterial enzymes. MZP is a more potent inhibitor of bacterial IMPDH. Resistant to mycophenolic acid (MPA) inhibition. In terms of biological role, catalyzes the conversion of inosine 5'-phosphate (IMP) to xanthosine 5'-phosphate (XMP), the first committed and rate-limiting step in the de novo synthesis of guanine nucleotides, and therefore plays an important role in the regulation of cell growth. The protein is Inosine-5'-monophosphate dehydrogenase of Cryptosporidium parvum.